The chain runs to 83 residues: Colicin-E5 immunity protein in ColE9 (83 aa).

In Escherichia coli, this protein is Colicin-E5 immunity protein in ColE9.